The primary structure comprises 232 residues: Lipoprotein-releasing system ATP-binding protein LolD 2 (232 aa).

The 221-residue stretch at 11-231 (VYLHDIKRQY…SLQDGVVVEL (221 aa)) folds into the ABC transporter domain. 47-54 (APSGSGKS) contributes to the ATP binding site.

It belongs to the ABC transporter superfamily. Lipoprotein translocase (TC 3.A.1.125) family. The complex is composed of two ATP-binding proteins (LolD) and two transmembrane proteins (LolC and LolE).

The protein resides in the cell inner membrane. Its function is as follows. Part of the ABC transporter complex LolCDE involved in the translocation of mature outer membrane-directed lipoproteins, from the inner membrane to the periplasmic chaperone, LolA. Responsible for the formation of the LolA-lipoprotein complex in an ATP-dependent manner. The polypeptide is Lipoprotein-releasing system ATP-binding protein LolD 2 (Rhodopseudomonas palustris (strain ATCC BAA-98 / CGA009)).